Reading from the N-terminus, the 353-residue chain is Methionine import ATP-binding protein MetN (353 aa).

Residues 8–249 (LDQIDVTFHQ…PKQPLTQDFI (242 aa)) form the ABC transporter domain. 42–49 (GYSGAGKS) serves as a coordination point for ATP.

It belongs to the ABC transporter superfamily. Methionine importer (TC 3.A.1.24) family. In terms of assembly, the complex is composed of two ATP-binding proteins (MetN), two transmembrane proteins (MetI) and a solute-binding protein (MetQ).

It localises to the cell membrane. The enzyme catalyses L-methionine(out) + ATP + H2O = L-methionine(in) + ADP + phosphate + H(+). It catalyses the reaction D-methionine(out) + ATP + H2O = D-methionine(in) + ADP + phosphate + H(+). In terms of biological role, part of the ABC transporter complex MetNIQ involved in methionine import. Responsible for energy coupling to the transport system. The polypeptide is Methionine import ATP-binding protein MetN (Streptococcus pneumoniae serotype 4 (strain ATCC BAA-334 / TIGR4)).